Reading from the N-terminus, the 122-residue chain is Large ribosomal subunit protein uL22 (122 aa).

The interval 102–122 (VAEGKEMKSSKSHKKNQAEGK) is disordered.

Belongs to the universal ribosomal protein uL22 family. In terms of assembly, part of the 50S ribosomal subunit.

In terms of biological role, this protein binds specifically to 23S rRNA; its binding is stimulated by other ribosomal proteins, e.g. L4, L17, and L20. It is important during the early stages of 50S assembly. It makes multiple contacts with different domains of the 23S rRNA in the assembled 50S subunit and ribosome. The globular domain of the protein is located near the polypeptide exit tunnel on the outside of the subunit, while an extended beta-hairpin is found that lines the wall of the exit tunnel in the center of the 70S ribosome. The polypeptide is Large ribosomal subunit protein uL22 (Helicobacter pylori (strain ATCC 700392 / 26695) (Campylobacter pylori)).